The chain runs to 784 residues: Ribosome biogenesis protein BOP1 homolog (784 aa).

Basic residues predominate over residues 1 to 11 (MTKKLALKRRG). The segment at 1 to 159 (MTKKLALKRR…DSDTSDEEDI (159 aa)) is disordered. 4 stretches are compositionally biased toward acidic residues: residues 27–36 (SENEEEEEDL), 45–54 (EDSTDDEGID), 62–73 (SEELQFESDEEG), and 84–111 (AEEDEESSDEEDNEEEGSTDEEEVEDEE). Composition is skewed to basic and acidic residues over residues 112-123 (KVSKSKQSDDKP) and 138-148 (LPKRDSSKPEY). Residues 149–158 (QDSDTSDEED) show a composition bias toward acidic residues. 7 WD repeats span residues 445–486 (GHTD…RTIE), 488–526 (DEVVRCVAWCPNPKLSIIAVATGNRLLLVNPKVGDKVLV), 570–612 (THFK…SQIP), 615–653 (KSKGLIQFVLFHPVKPCFFVATQHNIRIYDLVKQELVKK), 656–695 (TNSKWISGMSIHPKGDNLLVSTYDKKMLWFDLDLSTKPYQ), 699–738 (LHRNAVRSVAFHRRYPLFASGSDDQAVIVSHGMVYNDLLQ), and 754–784 (RDEFGVLDVNWHPVQPWVFSTGADSTIRLYT).

The protein belongs to the WD repeat BOP1/ERB1 family.

It is found in the nucleus. The protein localises to the nucleolus. It localises to the nucleoplasm. In terms of biological role, required for maturation of ribosomal RNAs and formation of the large ribosomal subunit. This is Ribosome biogenesis protein BOP1 homolog from Drosophila sechellia (Fruit fly).